The sequence spans 273 residues: Undecaprenyl-diphosphatase (273 aa).

The next 8 helical transmembrane spans lie at 18–40, 45–65, 92–112, 114–134, 151–171, 189–209, 225–245, and 253–273; these read GLTEFLPVSSTGHMILVGSLLGF, AKTFEVIIQLGSILAVVVVFW, GHILLGMIPAVVLGLVFHEQI, AIFAPIYVMYALVVGGVLLLA, LTYLQAFLIGCFQCLALWPGF, YAASEFSFILAVPMMLGATVL, MFAIGFVTAFVVALLAIKFFL, and FVPFAIYRFILAVVVYWILIG.

Belongs to the UppP family.

The protein localises to the cell inner membrane. The enzyme catalyses di-trans,octa-cis-undecaprenyl diphosphate + H2O = di-trans,octa-cis-undecaprenyl phosphate + phosphate + H(+). Functionally, catalyzes the dephosphorylation of undecaprenyl diphosphate (UPP). Confers resistance to bacitracin. The protein is Undecaprenyl-diphosphatase of Sodalis glossinidius (strain morsitans).